Reading from the N-terminus, the 996-residue chain is Receptor-like protein kinase HSL1 (996 aa).

The first 15 residues, 1–15 (MYLLFLFLLFPTVFS), serve as a signal peptide directing secretion. The Extracellular portion of the chain corresponds to 16–618 (LNQDGFILQQ…ENEAKKRGYV (603 aa)). LRR repeat units lie at residues 59–83 (FSSV…ICRL), 84–107 (SNLA…IAAC), 109–131 (SLQT…LADI), 133–154 (TLVH…SFGK), 155–178 (FENL…FLGN), 179–203 (ISTL…EFGN), 205–228 (TNLE…LGQL), 229–252 (SKLV…LGGL), 253–276 (TNVV…LGNL), 278–299 (SLRL…ELCR), 300–323 (VPLE…IALS), 325–347 (NLYE…LGLN), 348–371 (SPLR…LCAK), 373–395 (ELEE…LADC), 396–419 (RSLT…FWGL), 421–443 (HVNL…IGGA), 444–467 (SNLS…IGSL), 468–491 (DNLN…LMSL), 493–515 (ELGT…IKSW), 516–539 (KKLN…IGSL), 541–562 (VLNY…SLQS), and 563–586 (LKLN…LAKD). Residues Asn93 and Asn97 are each glycosylated (N-linked (GlcNAc...) asparagine). 4 N-linked (GlcNAc...) asparagine glycosylation sites follow: Asn143, Asn178, Asn186, and Asn203. N-linked (GlcNAc...) asparagine glycosylation occurs at Asn262. N-linked (GlcNAc...) asparagine glycosylation is found at Asn429 and Asn445. Asn569 carries an N-linked (GlcNAc...) asparagine glycan. The chain crosses the membrane as a helical span at residues 619–639 (WLLRSIFVLAAMVLLAGVAWF). Over 640–996 (YFKYRTFKKA…EDTSDQGSIA (357 aa)) the chain is Cytoplasmic. Residues 676 to 962 (LDEDNVIGAG…RRVVKMLQEI (287 aa)) enclose the Protein kinase domain. Residues 682-690 (IGAGASGKV) and Lys704 contribute to the ATP site. Phosphotyrosine occurs at positions 764 and 802. Residue Asp815 is the Proton acceptor of the active site. Residue Ser851 is modified to Phosphoserine. A phosphotyrosine mark is found at Tyr859 and Tyr866. A Phosphothreonine modification is found at Thr867. The interval 967 to 996 (EDSLHKIRDDKDGKLTPYYNEDTSDQGSIA) is disordered. Basic and acidic residues predominate over residues 968–980 (DSLHKIRDDKDGK).

It belongs to the protein kinase superfamily. Ser/Thr protein kinase family.

It localises to the cell membrane. It catalyses the reaction L-seryl-[protein] + ATP = O-phospho-L-seryl-[protein] + ADP + H(+). It carries out the reaction L-threonyl-[protein] + ATP = O-phospho-L-threonyl-[protein] + ADP + H(+). In Arabidopsis thaliana (Mouse-ear cress), this protein is Receptor-like protein kinase HSL1 (HSL1).